Here is a 217-residue protein sequence, read N- to C-terminus: Thiopurine S-methyltransferase (217 aa).

S-adenosyl-L-methionine is bound by residues Trp-10, Leu-45, Glu-66, and Arg-127.

The protein belongs to the class I-like SAM-binding methyltransferase superfamily. TPMT family.

Its subcellular location is the cytoplasm. The enzyme catalyses S-adenosyl-L-methionine + a thiopurine = S-adenosyl-L-homocysteine + a thiopurine S-methylether.. The polypeptide is Thiopurine S-methyltransferase (Acinetobacter baylyi (strain ATCC 33305 / BD413 / ADP1)).